Reading from the N-terminus, the 101-residue chain is NADH-quinone oxidoreductase subunit K 1 (101 aa).

A run of 3 helical transmembrane segments spans residues 4 to 24, 31 to 51, and 64 to 84; these read IGTM…TVGV, VVIL…LVAF, and IFVM…VIAF.

This sequence belongs to the complex I subunit 4L family. NDH-1 is composed of 14 different subunits. Subunits NuoA, H, J, K, L, M, N constitute the membrane sector of the complex.

It localises to the cell inner membrane. It carries out the reaction a quinone + NADH + 5 H(+)(in) = a quinol + NAD(+) + 4 H(+)(out). Its function is as follows. NDH-1 shuttles electrons from NADH, via FMN and iron-sulfur (Fe-S) centers, to quinones in the respiratory chain. The immediate electron acceptor for the enzyme in this species is believed to be ubiquinone. Couples the redox reaction to proton translocation (for every two electrons transferred, four hydrogen ions are translocated across the cytoplasmic membrane), and thus conserves the redox energy in a proton gradient. The polypeptide is NADH-quinone oxidoreductase subunit K 1 (Koribacter versatilis (strain Ellin345)).